A 333-amino-acid chain; its full sequence is Biotin synthase (333 aa).

The 227-residue stretch at 47-273 (YYGNKVKLNM…MNPTKEIRIA (227 aa)) folds into the Radical SAM core domain. Residues cysteine 65, cysteine 69, and cysteine 72 each contribute to the [4Fe-4S] cluster site. Residues cysteine 109, cysteine 141, cysteine 201, and arginine 271 each contribute to the [2Fe-2S] cluster site.

The protein belongs to the radical SAM superfamily. Biotin synthase family. In terms of assembly, homodimer. The cofactor is [4Fe-4S] cluster. [2Fe-2S] cluster serves as cofactor.

The catalysed reaction is (4R,5S)-dethiobiotin + (sulfur carrier)-SH + 2 reduced [2Fe-2S]-[ferredoxin] + 2 S-adenosyl-L-methionine = (sulfur carrier)-H + biotin + 2 5'-deoxyadenosine + 2 L-methionine + 2 oxidized [2Fe-2S]-[ferredoxin]. It participates in cofactor biosynthesis; biotin biosynthesis; biotin from 7,8-diaminononanoate: step 2/2. Its function is as follows. Catalyzes the conversion of dethiobiotin (DTB) to biotin by the insertion of a sulfur atom into dethiobiotin via a radical-based mechanism. This is Biotin synthase from Geobacillus kaustophilus (strain HTA426).